We begin with the raw amino-acid sequence, 194 residues long: Putative adenylate kinase (194 aa).

ATP-binding residues include glycine 16, glycine 18, lysine 19, threonine 20, and threonine 21. Positions 36–59 (SVGELLAGTPYVTYIPELDTYEIV) are NMP. Residues 108 to 118 (RRGWPLKKILD) form an LID region. Arginine 109 provides a ligand contact to ATP.

It belongs to the adenylate kinase family. AK6 subfamily. Interacts with uS11. Not a structural component of 40S pre-ribosomes, but transiently interacts with them by binding to uS11.

The catalysed reaction is AMP + ATP = 2 ADP. The enzyme catalyses ATP + H2O = ADP + phosphate + H(+). Functionally, broad-specificity nucleoside monophosphate (NMP) kinase that catalyzes the reversible transfer of the terminal phosphate group between nucleoside triphosphates and monophosphates. Also has ATPase activity. Involved in the late maturation steps of the 30S ribosomal particles, specifically 16S rRNA maturation. While NMP activity is not required for ribosome maturation, ATPase activity is. Associates transiently with small ribosomal subunit protein uS11. ATP hydrolysis breaks the interaction with uS11. May temporarily remove uS11 from the ribosome to enable a conformational change of the ribosomal RNA that is needed for the final maturation step of the small ribosomal subunit. The polypeptide is Putative adenylate kinase (Pyrobaculum aerophilum (strain ATCC 51768 / DSM 7523 / JCM 9630 / CIP 104966 / NBRC 100827 / IM2)).